We begin with the raw amino-acid sequence, 203 residues long: Ribosome hibernation promotion factor (203 aa).

The protein belongs to the HPF/YfiA ribosome-associated protein family. Long HPF subfamily. As to quaternary structure, interacts with 100S ribosomes.

Its subcellular location is the cytoplasm. Required for dimerization of active 70S ribosomes into 100S ribosomes in stationary phase; 100S ribosomes are translationally inactive and sometimes present during exponential growth. In Bradyrhizobium diazoefficiens (strain JCM 10833 / BCRC 13528 / IAM 13628 / NBRC 14792 / USDA 110), this protein is Ribosome hibernation promotion factor.